The chain runs to 334 residues: Dipeptide transport ATP-binding protein DppF (334 aa).

The region spanning 13–262 (LQAIDLKKHY…PRHPYTQALL (250 aa)) is the ABC transporter domain. ATP is bound at residue 55–62 (GESGCGKS).

The protein belongs to the ABC transporter superfamily. In terms of assembly, the complex is composed of two ATP-binding proteins (DppD and DppF), two transmembrane proteins (DppB and DppC) and a solute-binding protein (DppA). MppA can replace DppA as binding protein for heme and ALA transport.

Its subcellular location is the cell inner membrane. It catalyses the reaction a dipeptide(out) + ATP + H2O = a dipeptide(in) + ADP + phosphate + H(+). In terms of biological role, part of the ABC transporter DppABCDF involved in dipeptide transport. Responsible for energy coupling to the transport system. Functionally, when a foreign outer membrane heme receptor is expressed in E.coli, DppABCDF can also transport heme and its precursor, 5-aminolevulinic acid (ALA), from the periplasm into the cytoplasm. This Escherichia coli (strain K12) protein is Dipeptide transport ATP-binding protein DppF (dppF).